A 443-amino-acid chain; its full sequence is Thymidine phosphorylase (443 aa).

Belongs to the thymidine/pyrimidine-nucleoside phosphorylase family. As to quaternary structure, homodimer.

It carries out the reaction thymidine + phosphate = 2-deoxy-alpha-D-ribose 1-phosphate + thymine. It participates in pyrimidine metabolism; dTMP biosynthesis via salvage pathway; dTMP from thymine: step 1/2. The enzymes which catalyze the reversible phosphorolysis of pyrimidine nucleosides are involved in the degradation of these compounds and in their utilization as carbon and energy sources, or in the rescue of pyrimidine bases for nucleotide synthesis. The protein is Thymidine phosphorylase of Shewanella denitrificans (strain OS217 / ATCC BAA-1090 / DSM 15013).